The following is a 1017-amino-acid chain: Formin-binding protein 4 (1017 aa).

Disordered regions lie at residues 1-141 and 160-202; these read MGKK…STDI and PAAP…TSGW. Serine 18 carries the post-translational modification Phosphoserine. The segment covering 40 to 69 has biased composition (low complexity); sequence DSTAAVPSQPAPSAATTTTTAVTAAAASDD. A phosphoserine mark is found at serine 116 and serine 124. Residues 130-141 show a composition bias toward polar residues; the sequence is SKETNGNQSTDI. Threonine 172 bears the Phosphothreonine mark. Over residues 181 to 200 the composition is skewed to low complexity; it reads AATSTLSSSTSNGTDSTQTS. The region spanning 214 to 248 is the WW 1 domain; it reads GIEMGDWQEVWDENTGCYYYWNTQTNEVTWELPQY. Residue lysine 290 is modified to N6-acetyllysine. Lysine 301 participates in a covalent cross-link: Glycyl lysine isopeptide (Lys-Gly) (interchain with G-Cter in SUMO1). Residue lysine 335 forms a Glycyl lysine isopeptide (Lys-Gly) (interchain with G-Cter in SUMO2) linkage. Lysine 348 is covalently cross-linked (Glycyl lysine isopeptide (Lys-Gly) (interchain with G-Cter in SUMO1); alternate). A Glycyl lysine isopeptide (Lys-Gly) (interchain with G-Cter in SUMO2); alternate cross-link involves residue lysine 348. 4 disordered regions span residues 421 to 519, 621 to 676, 706 to 792, and 899 to 994; these read LEEG…TTPK, ESQW…CKES, PLPL…IKRK, and TATI…AERN. A phosphoserine mark is found at serine 427, serine 432, serine 435, serine 438, and serine 442. A compositionally biased stretch (polar residues) spans 428–442; sequence VSGSSPRSDISQPAS. The segment covering 449–458 has biased composition (basic residues); it reads LMSKRGKWKM. Low complexity predominate over residues 461–474; that stretch reads RATSPESTSRSSSK. Position 464 is a phosphoserine (serine 464). A Phosphothreonine modification is found at threonine 479. The segment covering 491 to 513 has biased composition (basic and acidic residues); the sequence is NSEKIDENSDKEMEVEESPEKIK. Residues serine 499 and serine 508 each carry the phosphoserine modification. 2 positions are modified to phosphothreonine: threonine 516 and threonine 517. A Glycyl lysine isopeptide (Lys-Gly) (interchain with G-Cter in SUMO1); alternate cross-link involves residue lysine 519. Lysine 519 is covalently cross-linked (Glycyl lysine isopeptide (Lys-Gly) (interchain with G-Cter in SUMO2); alternate). The WW 2 domain occupies 595–629; the sequence is NATPKGWSCHWDRDHRRYFYVNEQSGESQWEFPDG. Residues 627–637 show a composition bias toward acidic residues; that stretch reads PDGEEEEEESQ. A compositionally biased stretch (basic and acidic residues) spans 640 to 656; that stretch reads ENRDETLAKQTLKDKTG. Residues 657-671 show a composition bias toward low complexity; sequence TDSNSTESSETSTGS. Positions 706–732 are enriched in pro residues; the sequence is PLPLEMPPPPPPPPESPPPPPPPPPPA. A compositionally biased stretch (acidic residues) spans 733–748; the sequence is EDGEIQEVEMEDEGSE. Over residues 764–786 the composition is skewed to low complexity; it reads SAQTTVVTSQSSVDSTISSSSST. The span at 904-925 shows a compositional bias: pro residues; it reads EPPPPPPPPPPPPPPAPKMPPP. Over residues 929–941 the composition is skewed to basic residues; that stretch reads KKGRKDKAKKSKT. Positions 957–970 are enriched in acidic residues; sequence LDEEDNSSSSEEDR. 3 positions are modified to phosphoserine: serine 963, serine 964, and serine 965. Residues 971–982 show a composition bias toward basic and acidic residues; the sequence is ESTAQKRIEEWK.

Binds FMN1. Interacts with the Arg/Gly-rich-flanked Pro-rich of KHDRBS1/SAM68. Arginine methylation in these regions has no effect on this binding. Highly expressed in the eye.

The chain is Formin-binding protein 4 (FNBP4) from Homo sapiens (Human).